Consider the following 558-residue polypeptide: Glucose-6-phosphate isomerase (558 aa).

Ala2 carries the N-acetylalanine modification. Lys12 is modified (N6-acetyllysine). Phosphoserine is present on residues Ser86 and Ser107. Lys142 is modified (N6-acetyllysine). Position 159-160 (159-160 (GS)) interacts with D-glucose 6-phosphate. Phosphoserine; by CK2 is present on Ser185. A D-glucose 6-phosphate-binding site is contributed by 210–215 (SKTFTT). Thr250 bears the Phosphothreonine mark. Residues Gln354, Glu358, and His389 each coordinate D-glucose 6-phosphate. Catalysis depends on Glu358, which acts as the Proton donor. His389 is a catalytic residue. Lys454 is subject to N6-acetyllysine; alternate. Lys454 carries the N6-malonyllysine; alternate modification. At Lys454 the chain carries N6-succinyllysine; alternate. Ser455 carries the post-translational modification Phosphoserine. Lys519 contributes to the D-glucose 6-phosphate binding site. Lys519 is an active-site residue.

Belongs to the GPI family. In terms of assembly, homodimer; in the catalytically active form. Monomer in the secreted form. Phosphorylation at Ser-185 by CK2 has been shown to decrease enzymatic activity and may contribute to secretion by a non-classical secretory pathway. In terms of processing, ISGylated.

The protein localises to the cytoplasm. It localises to the secreted. It catalyses the reaction alpha-D-glucose 6-phosphate = beta-D-fructose 6-phosphate. It participates in carbohydrate degradation; glycolysis; D-glyceraldehyde 3-phosphate and glycerone phosphate from D-glucose: step 2/4. In terms of biological role, in the cytoplasm, catalyzes the conversion of glucose-6-phosphate to fructose-6-phosphate, the second step in glycolysis, and the reverse reaction during gluconeogenesis. Besides it's role as a glycolytic enzyme, also acts as a secreted cytokine: acts as an angiogenic factor (AMF) that stimulates endothelial cell motility. Acts as a neurotrophic factor, neuroleukin, for spinal and sensory neurons. It is secreted by lectin-stimulated T-cells and induces immunoglobulin secretion. The sequence is that of Glucose-6-phosphate isomerase from Rattus norvegicus (Rat).